The sequence spans 269 residues: 4-hydroxy-tetrahydrodipicolinate reductase (269 aa).

NAD(+)-binding positions include Gly8–Met13, Glu34, Gly98–Thr100, and Ala122–Tyr125. The active-site Proton donor/acceptor is His155. His156 is a (S)-2,3,4,5-tetrahydrodipicolinate binding site. The Proton donor role is filled by Lys159. Residue Gly165–Thr166 participates in (S)-2,3,4,5-tetrahydrodipicolinate binding.

This sequence belongs to the DapB family.

The protein resides in the cytoplasm. It carries out the reaction (S)-2,3,4,5-tetrahydrodipicolinate + NAD(+) + H2O = (2S,4S)-4-hydroxy-2,3,4,5-tetrahydrodipicolinate + NADH + H(+). It catalyses the reaction (S)-2,3,4,5-tetrahydrodipicolinate + NADP(+) + H2O = (2S,4S)-4-hydroxy-2,3,4,5-tetrahydrodipicolinate + NADPH + H(+). It functions in the pathway amino-acid biosynthesis; L-lysine biosynthesis via DAP pathway; (S)-tetrahydrodipicolinate from L-aspartate: step 4/4. Functionally, catalyzes the conversion of 4-hydroxy-tetrahydrodipicolinate (HTPA) to tetrahydrodipicolinate. The polypeptide is 4-hydroxy-tetrahydrodipicolinate reductase (Aliivibrio salmonicida (strain LFI1238) (Vibrio salmonicida (strain LFI1238))).